Consider the following 638-residue polypeptide: Chaperone protein DnaK (638 aa).

T200 is subject to Phosphothreonine; by autocatalysis. Residues 598-621 (SLHMAATAEQQSGSTGAGAGASAK) form a disordered region.

It belongs to the heat shock protein 70 family.

Its function is as follows. Acts as a chaperone. This chain is Chaperone protein DnaK, found in Xylella fastidiosa (strain M23).